Reading from the N-terminus, the 363-residue chain is LIM and cysteine-rich domains protein 1 (363 aa).

Ser-16 is modified (phosphoserine). One can recognise a PET domain in the interval 99-206 (MIMTNPIATG…GEVALPGQGG (108 aa)). The disordered stretch occupies residues 200 to 233 (ALPGQGGLPKEEGKQQEKPEGAETAAPTANGSLG). Residues 208–220 (PKEEGKQQEKPEG) are compositionally biased toward basic and acidic residues. LIM zinc-binding domains are found at residues 239 to 304 (YVCE…SLRP) and 305 to 363 (RCSG…SKRT).

In terms of assembly, interacts with beta-dystroglycan. Interacts with GATA1, GATA4 and GATA6. Highly expressed in both skeletal muscle and cardiac muscle.

The protein resides in the cytoplasm. The protein localises to the nucleus. Transcriptional cofactor that restricts GATA6 function by inhibiting DNA-binding, resulting in repression of GATA6 transcriptional activation of downstream target genes. Represses GATA6-mediated trans activation of lung- and cardiac tissue-specific promoters. Inhibits DNA-binding by GATA4 and GATA1 to the cTNC promoter. Plays a critical role in the development of cardiac hypertrophy via activation of calcineurin/nuclear factor of activated T-cells signaling pathway. The sequence is that of LIM and cysteine-rich domains protein 1 (LMCD1) from Sus scrofa (Pig).